A 178-amino-acid chain; its full sequence is uncharacterized protein (178 aa).

A compositionally biased stretch (basic and acidic residues) spans 1–16 (MNKRTSVDASKEDLHP). A disordered region spans residues 1–43 (MNKRTSVDASKEDLHPADPQSGEGVPPNRKNTKTSPRGEGTAP).

This is an uncharacterized protein from Homo sapiens (Human).